The chain runs to 686 residues: DNA ligase (686 aa).

NAD(+) is bound by residues 33–37, 82–83, and Glu122; these read DSVYD and SL. Lys124 functions as the N6-AMP-lysine intermediate in the catalytic mechanism. NAD(+)-binding residues include Arg145, Glu182, Lys300, and Lys324. Positions 418, 421, 436, and 441 each coordinate Zn(2+). The BRCT domain maps to 600-686; that stretch reads AVSQILAGKK…PTVESGDLHP (87 aa).

It belongs to the NAD-dependent DNA ligase family. LigA subfamily. Mg(2+) is required as a cofactor. Mn(2+) serves as cofactor.

The enzyme catalyses NAD(+) + (deoxyribonucleotide)n-3'-hydroxyl + 5'-phospho-(deoxyribonucleotide)m = (deoxyribonucleotide)n+m + AMP + beta-nicotinamide D-nucleotide.. Functionally, DNA ligase that catalyzes the formation of phosphodiester linkages between 5'-phosphoryl and 3'-hydroxyl groups in double-stranded DNA using NAD as a coenzyme and as the energy source for the reaction. It is essential for DNA replication and repair of damaged DNA. In Synechococcus sp. (strain JA-2-3B'a(2-13)) (Cyanobacteria bacterium Yellowstone B-Prime), this protein is DNA ligase.